We begin with the raw amino-acid sequence, 49 residues long: Putative DNA-directed RNA polymerase subunit omega (49 aa).

This sequence belongs to the RNA polymerase subunit omega family.

It is found in the plastid. Its subcellular location is the chloroplast. The enzyme catalyses RNA(n) + a ribonucleoside 5'-triphosphate = RNA(n+1) + diphosphate. In terms of biological role, may be involved in RNA polymerase activity. The sequence is that of Putative DNA-directed RNA polymerase subunit omega (rpoZ) from Cyanidioschyzon merolae (strain NIES-3377 / 10D) (Unicellular red alga).